The primary structure comprises 438 residues: Probable glucose-6-phosphate isomerase (438 aa).

Catalysis depends on E280, which acts as the Proton donor. Catalysis depends on residues H301 and K410.

This sequence belongs to the GPI family.

The protein localises to the cytoplasm. The enzyme catalyses alpha-D-glucose 6-phosphate = beta-D-fructose 6-phosphate. It participates in carbohydrate biosynthesis; gluconeogenesis. The protein operates within carbohydrate degradation; glycolysis; D-glyceraldehyde 3-phosphate and glycerone phosphate from D-glucose: step 2/4. Its function is as follows. Catalyzes the reversible isomerization of glucose-6-phosphate to fructose-6-phosphate. The chain is Probable glucose-6-phosphate isomerase from Methanococcus maripaludis (strain DSM 14266 / JCM 13030 / NBRC 101832 / S2 / LL).